The primary structure comprises 335 residues: Vitamin B12 import system permease protein BtuC (335 aa).

9 helical membrane-spanning segments follow: residues 21-43 (FLAI…GENW), 63-82 (FPRV…AGAV), 95-114 (GLLG…VLMF), 119-141 (PFWL…LLTF), 153-175 (LLVG…YFST), 195-212 (WRHQ…IWLS), 244-266 (FAVG…IGLV), 281-303 (TLLP…LSRL), and 310-329 (VPIG…WLLL).

This sequence belongs to the binding-protein-dependent transport system permease family. FecCD subfamily. The complex is composed of two ATP-binding proteins (BtuD), two transmembrane proteins (BtuC) and a solute-binding protein (BtuF).

It is found in the cell inner membrane. Its function is as follows. Part of the ABC transporter complex BtuCDF involved in vitamin B12 import. Involved in the translocation of the substrate across the membrane. This is Vitamin B12 import system permease protein BtuC from Photorhabdus laumondii subsp. laumondii (strain DSM 15139 / CIP 105565 / TT01) (Photorhabdus luminescens subsp. laumondii).